A 161-amino-acid polypeptide reads, in one-letter code: Transcription antitermination protein NusB (161 aa).

The protein belongs to the NusB family.

In terms of biological role, involved in transcription antitermination. Required for transcription of ribosomal RNA (rRNA) genes. Binds specifically to the boxA antiterminator sequence of the ribosomal RNA (rrn) operons. This Nitrobacter winogradskyi (strain ATCC 25391 / DSM 10237 / CIP 104748 / NCIMB 11846 / Nb-255) protein is Transcription antitermination protein NusB.